The primary structure comprises 145 residues: D-aminoacyl-tRNA deacylase (145 aa).

The Gly-cisPro motif, important for rejection of L-amino acids signature appears at 137 to 138 (GP).

This sequence belongs to the DTD family. Homodimer.

The protein resides in the cytoplasm. The enzyme catalyses glycyl-tRNA(Ala) + H2O = tRNA(Ala) + glycine + H(+). It catalyses the reaction a D-aminoacyl-tRNA + H2O = a tRNA + a D-alpha-amino acid + H(+). Functionally, an aminoacyl-tRNA editing enzyme that deacylates mischarged D-aminoacyl-tRNAs. Also deacylates mischarged glycyl-tRNA(Ala), protecting cells against glycine mischarging by AlaRS. Acts via tRNA-based rather than protein-based catalysis; rejects L-amino acids rather than detecting D-amino acids in the active site. By recycling D-aminoacyl-tRNA to D-amino acids and free tRNA molecules, this enzyme counteracts the toxicity associated with the formation of D-aminoacyl-tRNA entities in vivo and helps enforce protein L-homochirality. This is D-aminoacyl-tRNA deacylase from Chromohalobacter salexigens (strain ATCC BAA-138 / DSM 3043 / CIP 106854 / NCIMB 13768 / 1H11).